The following is a 528-amino-acid chain: Peptide chain release factor 3 (528 aa).

In terms of domain architecture, tr-type G spans 10–280 (AKRRTFGIIS…IDMAPAPGPR (271 aa)). GTP is bound by residues 19–26 (SHPDAGKT), 87–91 (DTPGH), and 141–144 (NKLD).

Belongs to the TRAFAC class translation factor GTPase superfamily. Classic translation factor GTPase family. PrfC subfamily.

The protein localises to the cytoplasm. Functionally, increases the formation of ribosomal termination complexes and stimulates activities of RF-1 and RF-2. It binds guanine nucleotides and has strong preference for UGA stop codons. It may interact directly with the ribosome. The stimulation of RF-1 and RF-2 is significantly reduced by GTP and GDP, but not by GMP. The sequence is that of Peptide chain release factor 3 from Desulfotalea psychrophila (strain LSv54 / DSM 12343).